Here is a 166-residue protein sequence, read N- to C-terminus: 3-isopropylmalate dehydratase small subunit (166 aa).

This sequence belongs to the LeuD family. LeuD type 2 subfamily. Heterodimer of LeuC and LeuD.

It catalyses the reaction (2R,3S)-3-isopropylmalate = (2S)-2-isopropylmalate. It functions in the pathway amino-acid biosynthesis; L-leucine biosynthesis; L-leucine from 3-methyl-2-oxobutanoate: step 2/4. Functionally, catalyzes the isomerization between 2-isopropylmalate and 3-isopropylmalate, via the formation of 2-isopropylmaleate. This chain is 3-isopropylmalate dehydratase small subunit, found in Moorella thermoacetica (strain ATCC 39073 / JCM 9320).